The sequence spans 219 residues: MKSFVVAPFIVAIDGPAASGKGTLARRIATHYGMPHLDTGLTYRAVAKALLDKGLPLDDEALATDAALSLDLLAMDKAVLSAHAIGEAASKVAVMPAVRRALVEAQRHFANALPSSVLDGRDIGTVVCPDAAIKLFVTASPEVRARRRFDEVLARGDTADFAEILADLKKRDERDMNRTDSPLRPAEDAHLLDASEMSIEAAFLAAKKLIDHALAQHRG.

15–23 serves as a coordination point for ATP; it reads GPAASGKGT.

It belongs to the cytidylate kinase family. Type 1 subfamily.

Its subcellular location is the cytoplasm. It catalyses the reaction CMP + ATP = CDP + ADP. It carries out the reaction dCMP + ATP = dCDP + ADP. The protein is Cytidylate kinase of Brucella abortus (strain S19).